We begin with the raw amino-acid sequence, 316 residues long: Ribosomal RNA small subunit methyltransferase H (316 aa).

Residues Ala-35–His-37, Asp-55, Phe-84, Asp-105, and Gln-112 each bind S-adenosyl-L-methionine.

This sequence belongs to the methyltransferase superfamily. RsmH family.

The protein resides in the cytoplasm. It carries out the reaction cytidine(1402) in 16S rRNA + S-adenosyl-L-methionine = N(4)-methylcytidine(1402) in 16S rRNA + S-adenosyl-L-homocysteine + H(+). Specifically methylates the N4 position of cytidine in position 1402 (C1402) of 16S rRNA. The sequence is that of Ribosomal RNA small subunit methyltransferase H from Streptococcus thermophilus (strain CNRZ 1066).